A 166-amino-acid polypeptide reads, in one-letter code: KH homology domain-containing protein 1A (166 aa).

The KH; atypical domain occupies 19–78 (PLVFDMEEDKEDYIFGPHDEYLHTLEVHSNTLIQLERWFTPTGQTRVTVVGPLKARLWVM).

The protein belongs to the KHDC1 family.

Its subcellular location is the cytoplasm. In terms of biological role, has pro-apoptotic activity. This chain is KH homology domain-containing protein 1A (Khdc1a), found in Mus musculus (Mouse).